The following is a 397-amino-acid chain: Elongation factor Tu 1 (397 aa).

The region spanning 10-206 is the tr-type G domain; it reads KPHVNIGTIG…AVDENIPQPE (197 aa). The interval 19-26 is G1; sequence GHIDHGKT. 19–26 contributes to the GTP binding site; that stretch reads GHIDHGKT. Position 26 (T26) interacts with Mg(2+). The interval 62–66 is G2; that stretch reads GITIS. The interval 83-86 is G3; that stretch reads DCPG. GTP is bound by residues 83-87 and 138-141; these read DCPGH and NKAD. Residues 138–141 are G4; that stretch reads NKAD. The interval 176–178 is G5; that stretch reads SAL.

It belongs to the TRAFAC class translation factor GTPase superfamily. Classic translation factor GTPase family. EF-Tu/EF-1A subfamily. Monomer.

Its subcellular location is the cytoplasm. The enzyme catalyses GTP + H2O = GDP + phosphate + H(+). In terms of biological role, GTP hydrolase that promotes the GTP-dependent binding of aminoacyl-tRNA to the A-site of ribosomes during protein biosynthesis. The protein is Elongation factor Tu 1 of Streptomyces avermitilis (strain ATCC 31267 / DSM 46492 / JCM 5070 / NBRC 14893 / NCIMB 12804 / NRRL 8165 / MA-4680).